A 298-amino-acid chain; its full sequence is Acetylglutamate kinase (298 aa).

Residues 67 to 68, arginine 89, and asparagine 193 contribute to the substrate site; that span reads GG.

Belongs to the acetylglutamate kinase family. ArgB subfamily.

It localises to the cytoplasm. It catalyses the reaction N-acetyl-L-glutamate + ATP = N-acetyl-L-glutamyl 5-phosphate + ADP. The protein operates within amino-acid biosynthesis; L-arginine biosynthesis; N(2)-acetyl-L-ornithine from L-glutamate: step 2/4. Functionally, catalyzes the ATP-dependent phosphorylation of N-acetyl-L-glutamate. The chain is Acetylglutamate kinase from Desulfitobacterium hafniense (strain DSM 10664 / DCB-2).